Consider the following 176-residue polypeptide: Gamma-crystallin M2 (176 aa).

Beta/gamma crystallin 'Greek key' domains follow at residues 2–40 (GKVI…RVEG) and 41–83 (GCWV…RIIP). The tract at residues 84-88 (QYRGS) is connecting peptide. Beta/gamma crystallin 'Greek key' domains lie at 89–129 (YRMR…HVMD) and 130–172 (GYWI…RRIM).

The protein belongs to the beta/gamma-crystallin family. Monomer.

Crystallins are the dominant structural components of the vertebrate eye lens. The protein is Gamma-crystallin M2 (GM2) of Chiloscyllium indicum (Slender bamboo shark).